The chain runs to 404 residues: Acetate kinase (404 aa).

A Mg(2+)-binding site is contributed by Asn7. Residue Lys14 coordinates ATP. Arg95 is a substrate binding site. Residue Asp152 is the Proton donor/acceptor of the active site. ATP is bound by residues 212–216 (HLGNG), 286–288 (DMR), and 334–338 (GIGEN). Glu388 contributes to the Mg(2+) binding site.

The protein belongs to the acetokinase family. In terms of assembly, homodimer. Mg(2+) is required as a cofactor. The cofactor is Mn(2+).

It is found in the cytoplasm. It carries out the reaction acetate + ATP = acetyl phosphate + ADP. The protein operates within metabolic intermediate biosynthesis; acetyl-CoA biosynthesis; acetyl-CoA from acetate: step 1/2. Catalyzes the formation of acetyl phosphate from acetate and ATP. Can also catalyze the reverse reaction. The chain is Acetate kinase from Nitratidesulfovibrio vulgaris (strain DSM 19637 / Miyazaki F) (Desulfovibrio vulgaris).